The following is a 351-amino-acid chain: Quinolinate phosphoribosyltransferase [decarboxylating] 2, mitochondrial (351 aa).

Residues Arg142, 173–175 (TRK), Arg197, Lys207, Glu240, Asp267, 299–301 (SGN), and 320–322 (SGA) each bind substrate.

This sequence belongs to the NadC/ModD family.

Its subcellular location is the mitochondrion. It catalyses the reaction nicotinate beta-D-ribonucleotide + CO2 + diphosphate = quinolinate + 5-phospho-alpha-D-ribose 1-diphosphate + 2 H(+). Its pathway is alkaloid biosynthesis; nicotine biosynthesis. It participates in cofactor biosynthesis; NAD(+) biosynthesis; nicotinate D-ribonucleotide from quinolinate: step 1/1. Involved in the biosynthesis of pyridine alkaloid natural products, leading mainly to the production of anabasine, anatabine, nicotine and nornicotine, effective deterrents against herbivores with antiparasitic and pesticide properties (neurotoxins); nornicotine serves as the precursor in the synthesis of the carcinogen compound N'-nitrosonornicotine (NNN). Involved in the catabolism of quinolinic acid (QA). The protein is Quinolinate phosphoribosyltransferase [decarboxylating] 2, mitochondrial of Nicotiana glauca (Glaucous tobacco).